The sequence spans 418 residues: Imidazolonepropionase (418 aa).

Positions 80 and 82 each coordinate Fe(3+). Zn(2+) is bound by residues H80 and H82. 4-imidazolone-5-propanoate is bound by residues R89, Y152, and H185. Residue Y152 coordinates N-formimidoyl-L-glutamate. H250 is a binding site for Fe(3+). H250 provides a ligand contact to Zn(2+). Q253 lines the 4-imidazolone-5-propanoate pocket. D325 lines the Fe(3+) pocket. Residue D325 coordinates Zn(2+). Residues N327 and G329 each coordinate N-formimidoyl-L-glutamate. 4-imidazolone-5-propanoate is bound at residue S330.

This sequence belongs to the metallo-dependent hydrolases superfamily. HutI family. Zn(2+) is required as a cofactor. Requires Fe(3+) as cofactor.

The protein localises to the cytoplasm. It carries out the reaction 4-imidazolone-5-propanoate + H2O = N-formimidoyl-L-glutamate. It functions in the pathway amino-acid degradation; L-histidine degradation into L-glutamate; N-formimidoyl-L-glutamate from L-histidine: step 3/3. Catalyzes the hydrolytic cleavage of the carbon-nitrogen bond in imidazolone-5-propanoate to yield N-formimidoyl-L-glutamate. It is the third step in the universal histidine degradation pathway. In Solibacter usitatus (strain Ellin6076), this protein is Imidazolonepropionase.